We begin with the raw amino-acid sequence, 1103 residues long: Platelet-derived growth factor receptor beta (1103 aa).

An N-terminal signal peptide occupies residues 1 to 31 (MQVPGTMPAPVLKGQALWLPLLLMLSPQASG). Ig-like C2-type domains are found at residues 33–120 (LVIT…YIFV), 129–210 (PVDP…YSLQ), 214–309 (INVS…INVT), 331–403 (HRSR…HEDA), and 416–524 (PVRV…VTVV). Topologically, residues 33-532 (LVITPPGPEL…VVPHSLPFKV (500 aa)) are extracellular. Residues Asn-45 and Asn-89 are each glycosylated (N-linked (GlcNAc...) asparagine). Intrachain disulfides connect Cys-54-Cys-100 and Cys-149-Cys-190. N-linked (GlcNAc...) asparagine glycans are attached at residues Asn-215 and Asn-230. Cysteines 235 and 291 form a disulfide. N-linked (GlcNAc...) asparagine glycans are attached at residues Asn-292, Asn-307, Asn-354, Asn-371, Asn-468, and Asn-479. The cysteines at positions 436 and 508 are disulfide-linked. A helical membrane pass occupies residues 533–553 (VVISAILALVVLTIISLIILI). The Cytoplasmic segment spans residues 554 to 1103 (MLWQKKPRYE…PRAEAEDSFL (550 aa)). Tyr-562, Tyr-579, and Tyr-581 each carry phosphotyrosine; by autocatalysis. A Protein kinase domain is found at 600–962 (LVLGRTLGSG…QLVLLLERLL (363 aa)). ATP is bound by residues 606-614 (LGSGAFGQV) and Lys-634. Tyr-686 bears the Phosphotyrosine; by ABL1 and ABL2 mark. 7 positions are modified to phosphotyrosine; by autocatalysis: Tyr-716, Tyr-740, Tyr-751, Tyr-763, Tyr-771, Tyr-775, and Tyr-778. Asp-826 acts as the Proton acceptor in catalysis. Residue Tyr-857 is modified to Phosphotyrosine; by autocatalysis. Phosphotyrosine; by ABL1 and ABL2 occurs at positions 934 and 970. Phosphotyrosine; by autocatalysis occurs at positions 1009 and 1021. Residues 1017–1103 (GDNDYIIPLP…PRAEAEDSFL (87 aa)) form a disordered region. Residues 1039-1059 (SSPSLASSTLNEVNTSSTISC) are compositionally biased toward polar residues. Residues 1065–1075 (PQEEPEPEPEP) show a composition bias toward acidic residues. Residues 1076 to 1086 (QPEPQVVPEPP) show a composition bias toward pro residues.

The protein belongs to the protein kinase superfamily. Tyr protein kinase family. CSF-1/PDGF receptor subfamily. As to quaternary structure, interacts with homodimeric PDGFB and PDGFD, and with heterodimers formed by PDGFA and PDGFB. May also interact with homodimeric PDGFC. Monomer in the absence of bound ligand. Interaction with homodimeric PDGFB, heterodimers formed by PDGFA and PDGFB or homodimeric PDGFD, leads to receptor dimerization, where both PDGFRA homodimers and heterodimers with PDGFRB are observed. Interacts with SH2B2/APS. Interacts directly (tyrosine phosphorylated) with SHB. Interacts (tyrosine phosphorylated) with PIK3R1 and RASA1. Interacts (tyrosine phosphorylated) with CBL. Interacts (tyrosine phosphorylated) with SRC and SRC family kinases. Interacts (tyrosine phosphorylated) with PIK3C2B, maybe indirectly. Interacts (tyrosine phosphorylated) with SHC1, GRB7, GRB10 and NCK1. Interaction with GRB2 is mediated by SHC1. Interacts (via C-terminus) with NHERF1. In terms of processing, N-glycosylated. Post-translationally, ubiquitinated. After autophosphorylation, the receptor is polyubiquitinated, leading to its degradation. Autophosphorylated on tyrosine residues upon ligand binding. Autophosphorylation occurs in trans, i.e. one subunit of the dimeric receptor phosphorylates tyrosine residues on the other subunit. Phosphorylation at Tyr-579, and to a lesser degree, Tyr-581 is important for interaction with SRC. Phosphorylation at Tyr-716 is important for interaction with GRB2. Phosphorylation at Tyr-740 and Tyr-751 is important for interaction with PIK3R1. Phosphorylation at Tyr-751 is important for interaction with NCK1. Phosphorylation at Tyr-771 and Tyr-857 is important for interaction with RASA1/GAP. Phosphorylation at Tyr-857 is important for efficient phosphorylation of PLCG1 and PTPN11, resulting in increased phosphorylation of AKT1, MAPK1/ERK2 and/or MAPK3/ERK1, PDCD6IP/ALIX and STAM, and in increased cell proliferation. Phosphorylation at Tyr-1009 is important for interaction with PTPN11. Phosphorylation at Tyr-1009 and Tyr-1021 is important for interaction with PLCG1. Dephosphorylated by PTPRJ at Tyr-751, Tyr-857, Tyr-1009 and Tyr-1021. Dephosphorylated by PTPN2 at Tyr-579 and Tyr-1021.

Its subcellular location is the cell membrane. The protein localises to the cytoplasmic vesicle. It is found in the lysosome lumen. It catalyses the reaction L-tyrosyl-[protein] + ATP = O-phospho-L-tyrosyl-[protein] + ADP + H(+). With respect to regulation, present in an inactive conformation in the absence of bound ligand. Binding of PDGFB and/or PDGFD leads to dimerization and activation by autophosphorylation on tyrosine residues. Its function is as follows. Tyrosine-protein kinase that acts as a cell-surface receptor for homodimeric PDGFB and PDGFD and for heterodimers formed by PDGFA and PDGFB, and plays an essential role in the regulation of embryonic development, cell proliferation, survival, differentiation, chemotaxis and migration. Plays an essential role in blood vessel development by promoting proliferation, migration and recruitment of pericytes and smooth muscle cells to endothelial cells. Plays a role in the migration of vascular smooth muscle cells and the formation of neointima at vascular injury sites. Required for normal development of the cardiovascular system. Required for normal recruitment of pericytes (mesangial cells) in the kidney glomerulus, and for normal formation of a branched network of capillaries in kidney glomeruli. Promotes rearrangement of the actin cytoskeleton and the formation of membrane ruffles. Binding of its cognate ligands - homodimeric PDGFB, heterodimers formed by PDGFA and PDGFB or homodimeric PDGFD -leads to the activation of several signaling cascades; the response depends on the nature of the bound ligand and is modulated by the formation of heterodimers between PDGFRA and PDGFRB. Phosphorylates PLCG1, PIK3R1, PTPN11, RASA1/GAP, CBL, SHC1 and NCK1. Activation of PLCG1 leads to the production of the cellular signaling molecules diacylglycerol and inositol 1,4,5-trisphosphate, mobilization of cytosolic Ca(2+) and the activation of protein kinase C. Phosphorylation of PIK3R1, the regulatory subunit of phosphatidylinositol 3-kinase, leads to the activation of the AKT1 signaling pathway. Phosphorylation of SHC1, or of the C-terminus of PTPN11, creates a binding site for GRB2, resulting in the activation of HRAS, RAF1 and down-stream MAP kinases, including MAPK1/ERK2 and/or MAPK3/ERK1. Promotes phosphorylation and activation of SRC family kinases. Promotes phosphorylation of PDCD6IP/ALIX and STAM. Receptor signaling is down-regulated by protein phosphatases that dephosphorylate the receptor and its down-stream effectors, and by rapid internalization of the activated receptor. The protein is Platelet-derived growth factor receptor beta (PDGFRB) of Canis lupus familiaris (Dog).